A 1668-amino-acid polypeptide reads, in one-letter code: Chitin synthase chs-2 (1668 aa).

Positions 1 to 19 (MMNTLDHRPLGRMETMEGK) are enriched in basic and acidic residues. Residues 1-51 (MMNTLDHRPLGRMETMEGKPDEDEVPTSSNSDAKGKGYYYSSGTVPTDDST) form a disordered region. At 1-116 (MMNTLDHRPL…HGFWHDASLQ (116 aa)) the chain is on the cytoplasmic side. The chain crosses the membrane as a helical span at residues 117–137 (VLKLATFLVLFLLTLGSAVVA). Over 138–176 (KSTFILMTSAIGWGGQTITICNQVISEATQNTVKLKNAH) the chain is Extracellular. Residues 177–197 (VVKWVWATLLALSAPEALCFV) traverse the membrane as a helical segment. Residues 198 to 212 (RSMHRTMFRNVKRPT) lie on the Cytoplasmic side of the membrane. The helical transmembrane segment at 213–233 (FIQFVFVLIIETFHSIGVGIL) threads the bilayer. Topologically, residues 234-242 (VFRIFPDLD) are extracellular. A helical membrane pass occupies residues 243 to 263 (AVTAAQLTNAMCFVPAILSVI). Residues 264–271 (SRKPNKSA) lie on the Cytoplasmic side of the membrane. Residues 272-292 (LLLVIIDFAAIAAQSSGFWAL) form a helical membrane-spanning segment. Residues 293-301 (PMFLPNLQK) lie on the Extracellular side of the membrane. The helical transmembrane segment at 302-322 (HLVAIPVSLTLISLAWWQNFV) threads the bilayer. Over 323–347 (HRDSVFPPVRTLAKFAQRLSERRSK) the chain is Cytoplasmic. Residues 348-368 (TYAFVSLWKICIYVVCCFLFI) traverse the membrane as a helical segment. At 369 to 487 (SSRMKIEDML…IYSNYVERNQ (119 aa)) the chain is on the extracellular side. Residue Asn-396 is glycosylated (N-linked (GlcNAc...) asparagine). Residues 488 to 508 (LTMAYDALWLVIFQFGAVFVC) traverse the membrane as a helical segment. At 509–522 (YHSSKFACKVMMQR) the chain is on the cytoplasmic side. Residues 523–543 (MGFALPMALSVPVTVLLLSTN) form a helical membrane-spanning segment. Residues 544–576 (CRMRQKDSCYGTNVLTVELFWQCNGASMSLADF) are Extracellular-facing. The helical transmembrane segment at 577-597 (ILTPQTWIWLCWLASQFWITI) threads the bilayer. At 598-1045 (HLWNPKHERL…ISIWYIIYQL (448 aa)) the chain is on the cytoplasmic side. Residues 1046-1066 (VMLISSILGPGTIFVMIIGAI) traverse the membrane as a helical segment. The Extracellular portion of the chain corresponds to 1067-1074 (SISFSIDT). A helical transmembrane segment spans residues 1075-1095 (LISLVIVSIPVVVFIVVCLTA). The Cytoplasmic portion of the chain corresponds to 1096 to 1100 (KPEHQ). A helical membrane pass occupies residues 1101–1121 (LICAQTIGAIFAMLMTAVVVG). Residues 1122-1136 (TSLQLQKDGLLSPHS) are Extracellular-facing. A helical transmembrane segment spans residues 1137–1157 (MFTVAVATSFLTAAILHPLEF). Thr-1158 is a topological domain (cytoplasmic). Residues 1159–1179 (CIIPGTIYFLAIPCMYMLLPI) traverse the membrane as a helical segment. The Extracellular portion of the chain corresponds to 1180–1375 (YSVCNMHTVS…RAGLIAIRNS (196 aa)). The interval 1192 to 1216 (TREDPRPTEKNTLAKKTPGNLESGD) is disordered. Residues 1280 to 1335 (QIDKCSEADEDEQAEIEDALEMSNQSHAAKKNQKWKQAQSEAWLADKALKRAEREY) are a coiled coil. A glycan (N-linked (GlcNAc...) asparagine) is linked at Asn-1303. A helical transmembrane segment spans residues 1376-1396 (HTVYFLMINIVFIISVLVLQI). At 1397 to 1440 (HKDCLNIEWPLGPKFNHTVRPCYANHDDNQKEEVWVMTRLQLEP) the chain is on the cytoplasmic side. A helical membrane pass occupies residues 1441 to 1461 (IGLVFLIFFVSILVIQFLAML). Residues 1462 to 1668 (CHRFGTLAHI…SSGDVELRRF (207 aa)) lie on the Extracellular side of the membrane. The interval 1625 to 1668 (RLFTAQQDQNSPTSDGNRRKSNSRPWDQPTSSATSSGDVELRRF) is disordered. Composition is skewed to polar residues over residues 1628-1639 (TAQQDQNSPTSD) and 1647-1661 (SRPW…TSSG).

Belongs to the chitin synthase family. Class IV subfamily.

Its subcellular location is the cell membrane. It carries out the reaction [(1-&gt;4)-N-acetyl-beta-D-glucosaminyl](n) + UDP-N-acetyl-alpha-D-glucosamine = [(1-&gt;4)-N-acetyl-beta-D-glucosaminyl](n+1) + UDP + H(+). May be involved in chitin synthesis in the pharynx during larval development. In Caenorhabditis elegans, this protein is Chitin synthase chs-2.